The following is a 231-amino-acid chain: DNA mismatch repair protein MutH (231 aa).

The protein belongs to the MutH family.

It is found in the cytoplasm. In terms of biological role, sequence-specific endonuclease that cleaves unmethylated GATC sequences. It is involved in DNA mismatch repair. The polypeptide is DNA mismatch repair protein MutH (Salmonella typhi).